An 82-amino-acid chain; its full sequence is Ranatensin (82 aa).

The N-terminal stretch at 1–27 (MTTIPAIGILPIDFLTILLLFSFISHS) is a signal peptide. The propeptide occupies 28 to 47 (VCVEFAEDAGELDKSNAFRR). Methionine 58 is modified (methionine amide). A propeptide spanning residues 62 to 82 (SLSDDTEQATMYSSRFVESTS) is cleaved from the precursor.

It belongs to the bombesin/neuromedin-B/ranatensin family. Expressed by the skin glands.

The protein resides in the secreted. This is Ranatensin from Lithobates pipiens (Northern leopard frog).